Here is a 108-residue protein sequence, read N- to C-terminus: Replication restart protein PriB (108 aa).

An SSB domain is found at 8-108 (VDNRFSLIGK…LHAEQIEFIE (101 aa)).

It belongs to the PriB family. As to quaternary structure, homodimer. Interacts with PriA and DnaT. Component of the replication restart primosome. Primosome assembly occurs via a 'hand-off' mechanism. PriA binds to replication forks, subsequently PriB then DnaT bind; DnaT then displaces ssDNA to generate the helicase loading substrate.

Its function is as follows. Involved in the restart of stalled replication forks, which reloads the replicative helicase on sites other than the origin of replication; the PriA-PriB pathway is the major replication restart pathway. During primosome assembly it facilitates complex formation between PriA and DnaT on DNA; stabilizes PriA on DNA. Stimulates the DNA unwinding activity of PriA helicase. This chain is Replication restart protein PriB, found in Histophilus somni (strain 129Pt) (Haemophilus somnus).